The primary structure comprises 1836 residues: Druantia protein DruE (1836 aa).

Positions 108–405 (SFLGEDASDL…FAQDLTGLSP (298 aa)) constitute a Helicase ATP-binding domain. Residue 121-128 (TGTGSGKT) coordinates ATP. The short motif at 347–350 (DEAH) is the DEAH box element. The region spanning 1014–1199 (DCTALMPFAL…EVKVNNPKIA (186 aa)) is the Helicase C-terminal domain.

The protein localises to the cytoplasm. In terms of biological role, component of antiviral defense system Druantia type I, composed of DruA, DruB, DruC, DruD and DruE. Expression of Druantia in E.coli (strain MG1655) confers resistance to phage lambda, SECphi18, SECphi27 and T4. This protein is probably a helicase. The chain is Druantia protein DruE from Escherichia coli (strain UMEA 4076-1).